The sequence spans 270 residues: ATP synthase subunit b 1 (270 aa).

A helical membrane pass occupies residues 2–22 (LIDWFTVIAQLINFLVLVWLL).

This sequence belongs to the ATPase B chain family. In terms of assembly, F-type ATPases have 2 components, F(1) - the catalytic core - and F(0) - the membrane proton channel. F(1) has five subunits: alpha(3), beta(3), gamma(1), delta(1), epsilon(1). F(0) has three main subunits: a(1), b(2) and c(10-14). The alpha and beta chains form an alternating ring which encloses part of the gamma chain. F(1) is attached to F(0) by a central stalk formed by the gamma and epsilon chains, while a peripheral stalk is formed by the delta and b chains.

It is found in the cell inner membrane. F(1)F(0) ATP synthase produces ATP from ADP in the presence of a proton or sodium gradient. F-type ATPases consist of two structural domains, F(1) containing the extramembraneous catalytic core and F(0) containing the membrane proton channel, linked together by a central stalk and a peripheral stalk. During catalysis, ATP synthesis in the catalytic domain of F(1) is coupled via a rotary mechanism of the central stalk subunits to proton translocation. In terms of biological role, component of the F(0) channel, it forms part of the peripheral stalk, linking F(1) to F(0). The polypeptide is ATP synthase subunit b 1 (Marinomonas sp. (strain MWYL1)).